A 142-amino-acid chain; its full sequence is Large ribosomal subunit protein uL11 (142 aa).

The protein belongs to the universal ribosomal protein uL11 family. As to quaternary structure, part of the ribosomal stalk of the 50S ribosomal subunit. Interacts with L10 and the large rRNA to form the base of the stalk. L10 forms an elongated spine to which L12 dimers bind in a sequential fashion forming a multimeric L10(L12)X complex. One or more lysine residues are methylated.

In terms of biological role, forms part of the ribosomal stalk which helps the ribosome interact with GTP-bound translation factors. This Pseudoalteromonas atlantica (strain T6c / ATCC BAA-1087) protein is Large ribosomal subunit protein uL11.